A 3013-amino-acid polypeptide reads, in one-letter code: Protein furry homolog-like (3013 aa).

At serine 2 the chain carries N-acetylserine. A disordered region spans residues 90 to 109; sequence DESYEYRPRSSTKSKGDEQQ. Serine 844 bears the Phosphoserine mark. Disordered regions lie at residues 878–897 and 1476–1498; these read SSST…LAST and VTSG…PDNK. The segment covering 1476–1486 has biased composition (low complexity); it reads VTSGTTSSSNT. Serine 1914, serine 1935, serine 1941, serine 1945, and serine 1957 each carry phosphoserine. Residue threonine 1959 is modified to Phosphothreonine. Residues serine 1978, serine 2272, and serine 2454 each carry the phosphoserine modification. A disordered region spans residues 2459-2492; the sequence is DKGDTPSLQEYQCSSSTPSLNLTNQEDTDESSEE. Residues 2464-2483 show a composition bias toward polar residues; sequence PSLQEYQCSSSTPSLNLTNQ. Serine 2499 carries the post-translational modification Phosphoserine. Disordered stretches follow at residues 2508-2567 and 2636-2660; these read LNSD…DTTS and EEEA…EVQT. Polar residues-rich tracts occupy residues 2528-2539 and 2555-2567; these read SEDSTGSITTEE and DNAN…DTTS.

This sequence belongs to the furry protein family. As to expression, widely expressed with higher expression in colon, placenta, brain and cells of lymphoid origin.

In terms of biological role, plays a key role in maintaining the integrity of polarized cell extensions during morphogenesis, regulates the actin cytoskeleton and plays a key role in patterning sensory neuron dendritic fields by promoting avoidance between homologous dendrites as well as by limiting dendritic branching. May function as a transcriptional activator. The protein is Protein furry homolog-like (FRYL) of Homo sapiens (Human).